Consider the following 893-residue polypeptide: Protein translocase subunit SecA (893 aa).

ATP contacts are provided by residues Q87, G105–T109, and D512. Positions V840 to E849 are enriched in basic and acidic residues. The segment at V840–A893 is disordered. The segment covering Q855–T868 has biased composition (polar residues). Zn(2+) is bound by residues C877, C879, C888, and H889. Over residues K883 to A893 the composition is skewed to basic residues.

Belongs to the SecA family. In terms of assembly, monomer and homodimer. Part of the essential Sec protein translocation apparatus which comprises SecA, SecYEG and auxiliary proteins SecDF-YajC and YidC. It depends on Zn(2+) as a cofactor.

Its subcellular location is the cell inner membrane. It localises to the cytoplasm. It carries out the reaction ATP + H2O + cellular proteinSide 1 = ADP + phosphate + cellular proteinSide 2.. Functionally, part of the Sec protein translocase complex. Interacts with the SecYEG preprotein conducting channel. Has a central role in coupling the hydrolysis of ATP to the transfer of proteins into and across the cell membrane, serving both as a receptor for the preprotein-SecB complex and as an ATP-driven molecular motor driving the stepwise translocation of polypeptide chains across the membrane. This chain is Protein translocase subunit SecA, found in Colwellia psychrerythraea (strain 34H / ATCC BAA-681) (Vibrio psychroerythus).